A 397-amino-acid chain; its full sequence is Iron-sulfur cluster assembly SufBD family protein Mb1497 (397 aa).

Belongs to the iron-sulfur cluster assembly SufBD family.

This chain is Iron-sulfur cluster assembly SufBD family protein Mb1497, found in Mycobacterium bovis (strain ATCC BAA-935 / AF2122/97).